The sequence spans 292 residues: Ribosomal protein L11 methyltransferase (292 aa).

S-adenosyl-L-methionine-binding residues include Thr-143, Gly-164, Asp-186, and Asn-228.

Belongs to the methyltransferase superfamily. PrmA family.

It is found in the cytoplasm. It carries out the reaction L-lysyl-[protein] + 3 S-adenosyl-L-methionine = N(6),N(6),N(6)-trimethyl-L-lysyl-[protein] + 3 S-adenosyl-L-homocysteine + 3 H(+). Functionally, methylates ribosomal protein L11. This is Ribosomal protein L11 methyltransferase from Tolumonas auensis (strain DSM 9187 / NBRC 110442 / TA 4).